A 602-amino-acid polypeptide reads, in one-letter code: Leucine-rich repeat-containing protein 40 (602 aa).

A disordered region spans residues 1–26; it reads MSRHMRAPRFDPRAGFHAEGKDRGPS. Positions 8–24 are enriched in basic and acidic residues; that stretch reads PRFDPRAGFHAEGKDRG. Residues 35-58 form an LRR 1 repeat; that stretch reads ARSSGQLNLAGRNLGEVPQCVWRI. S71 carries the phosphoserine modification. 20 LRR repeats span residues 81 to 103, 104 to 126, 127 to 149, 150 to 172, 174 to 195, 196 to 219, 221 to 241, 242 to 266, 268 to 287, 288 to 310, 311 to 334, 336 to 356, 398 to 421, 424 to 447, 449 to 470, 471 to 494, 496 to 517, 519 to 540, 541 to 564, and 566 to 587; these read QTDL…DLRL, LPAL…AIRE, LDNL…EITS, LKNL…GFEH, SCLE…DFAL, LSSL…ISRM, RLKH…DVGS, MESL…SCRQ, KELH…HLQH, LQAI…EMAL, LQSL…LGNL, LKFL…IIAK, IATL…LFDA, TTLI…IVEL, EMVL…ELCL, LQKL…MSSL, KLQT…LYRI, TLEA…KMKL, MENL…LGNC, and QLRT…ILMK.

The sequence is that of Leucine-rich repeat-containing protein 40 (Lrrc40) from Mus musculus (Mouse).